The sequence spans 565 residues: Proline--tRNA ligase (565 aa).

This sequence belongs to the class-II aminoacyl-tRNA synthetase family. ProS type 1 subfamily. Homodimer.

It localises to the cytoplasm. It carries out the reaction tRNA(Pro) + L-proline + ATP = L-prolyl-tRNA(Pro) + AMP + diphosphate. In terms of biological role, catalyzes the attachment of proline to tRNA(Pro) in a two-step reaction: proline is first activated by ATP to form Pro-AMP and then transferred to the acceptor end of tRNA(Pro). As ProRS can inadvertently accommodate and process non-cognate amino acids such as alanine and cysteine, to avoid such errors it has two additional distinct editing activities against alanine. One activity is designated as 'pretransfer' editing and involves the tRNA(Pro)-independent hydrolysis of activated Ala-AMP. The other activity is designated 'posttransfer' editing and involves deacylation of mischarged Ala-tRNA(Pro). The misacylated Cys-tRNA(Pro) is not edited by ProRS. This is Proline--tRNA ligase from Francisella tularensis subsp. holarctica (strain FTNF002-00 / FTA).